A 226-amino-acid polypeptide reads, in one-letter code: N-(5'-phosphoribosyl)anthranilate isomerase (226 aa).

This sequence belongs to the TrpF family.

The enzyme catalyses N-(5-phospho-beta-D-ribosyl)anthranilate = 1-(2-carboxyphenylamino)-1-deoxy-D-ribulose 5-phosphate. Its pathway is amino-acid biosynthesis; L-tryptophan biosynthesis; L-tryptophan from chorismate: step 3/5. The protein is N-(5'-phosphoribosyl)anthranilate isomerase of Synechococcus sp. (strain JA-3-3Ab) (Cyanobacteria bacterium Yellowstone A-Prime).